Consider the following 394-residue polypeptide: 8-amino-7-oxononanoate synthase (394 aa).

Position 21 (Arg21) interacts with substrate. 112-113 (GY) contributes to the pyridoxal 5'-phosphate binding site. His137 contributes to the substrate binding site. Ser183, His211, and Thr239 together coordinate pyridoxal 5'-phosphate. Lys242 carries the N6-(pyridoxal phosphate)lysine modification. Thr358 is a binding site for substrate.

Belongs to the class-II pyridoxal-phosphate-dependent aminotransferase family. BioF subfamily. In terms of assembly, homodimer. The cofactor is pyridoxal 5'-phosphate.

It carries out the reaction 6-carboxyhexanoyl-[ACP] + L-alanine + H(+) = (8S)-8-amino-7-oxononanoate + holo-[ACP] + CO2. It functions in the pathway cofactor biosynthesis; biotin biosynthesis. Catalyzes the decarboxylative condensation of pimeloyl-[acyl-carrier protein] and L-alanine to produce 8-amino-7-oxononanoate (AON), [acyl-carrier protein], and carbon dioxide. This Burkholderia pseudomallei (strain K96243) protein is 8-amino-7-oxononanoate synthase.